Reading from the N-terminus, the 291-residue chain is Small ribosomal subunit biogenesis GTPase RsgA 2 (291 aa).

The region spanning 63-221 is the CP-type G domain; the sequence is ENALVRPPVA…VADTPGFSSI (159 aa). GTP contacts are provided by residues 112–115 and 164–172; these read SKMD and GQSGVGKST. Residues C245, C250, H252, and C258 each contribute to the Zn(2+) site.

This sequence belongs to the TRAFAC class YlqF/YawG GTPase family. RsgA subfamily. In terms of assembly, monomer. Associates with 30S ribosomal subunit, binds 16S rRNA. Zn(2+) serves as cofactor.

The protein resides in the cytoplasm. In terms of biological role, one of several proteins that assist in the late maturation steps of the functional core of the 30S ribosomal subunit. Helps release RbfA from mature subunits. May play a role in the assembly of ribosomal proteins into the subunit. Circularly permuted GTPase that catalyzes slow GTP hydrolysis, GTPase activity is stimulated by the 30S ribosomal subunit. This chain is Small ribosomal subunit biogenesis GTPase RsgA 2, found in Listeria innocua serovar 6a (strain ATCC BAA-680 / CLIP 11262).